The sequence spans 926 residues: Alanine--tRNA ligase (926 aa).

Zn(2+) is bound by residues histidine 611, histidine 615, cysteine 714, and histidine 718.

It belongs to the class-II aminoacyl-tRNA synthetase family. The cofactor is Zn(2+).

The protein localises to the cytoplasm. It catalyses the reaction tRNA(Ala) + L-alanine + ATP = L-alanyl-tRNA(Ala) + AMP + diphosphate. Catalyzes the attachment of alanine to tRNA(Ala) in a two-step reaction: alanine is first activated by ATP to form Ala-AMP and then transferred to the acceptor end of tRNA(Ala). Also edits incorrectly charged Ser-tRNA(Ala) and Gly-tRNA(Ala) via its editing domain. In Methanosarcina mazei (strain ATCC BAA-159 / DSM 3647 / Goe1 / Go1 / JCM 11833 / OCM 88) (Methanosarcina frisia), this protein is Alanine--tRNA ligase.